The sequence spans 463 residues: A-type ATP synthase subunit B (463 aa).

Belongs to the ATPase alpha/beta chains family. In terms of assembly, has multiple subunits with at least A(3), B(3), C, D, E, F, H, I and proteolipid K(x).

It is found in the cell membrane. In terms of biological role, component of the A-type ATP synthase that produces ATP from ADP in the presence of a proton gradient across the membrane. The B chain is a regulatory subunit. The polypeptide is A-type ATP synthase subunit B (Methanothrix thermoacetophila (strain DSM 6194 / JCM 14653 / NBRC 101360 / PT) (Methanosaeta thermophila)).